A 238-amino-acid chain; its full sequence is ATP synthase subunit a (238 aa).

5 helical membrane passes run 18–38 (LTLLAVCIVTILLIFGFVFWA), 76–96 (YSLLLFTIFLFVAVANNLGLF), 114–134 (NLAFDLALSLFVTLLVHIEGI), 166–186 (SLAIRLFGNIFAGEVVTGLIV), and 193–213 (LYWWPIAFLVNIAWTAFSIFI).

This sequence belongs to the ATPase A chain family. F-type ATPases have 2 components, CF(1) - the catalytic core - and CF(0) - the membrane proton channel. CF(1) has five subunits: alpha(3), beta(3), gamma(1), delta(1), epsilon(1). CF(0) has three main subunits: a(1), b(2) and c(9-12). The alpha and beta chains form an alternating ring which encloses part of the gamma chain. CF(1) is attached to CF(0) by a central stalk formed by the gamma and epsilon chains, while a peripheral stalk is formed by the delta and b chains.

The protein localises to the cell membrane. Key component of the proton channel; it plays a direct role in the translocation of protons across the membrane. The polypeptide is ATP synthase subunit a (Streptococcus equi subsp. zooepidemicus (strain H70)).